We begin with the raw amino-acid sequence, 135 residues long: Large ribosomal subunit protein eL32 (135 aa).

The protein belongs to the eukaryotic ribosomal protein eL32 family.

This chain is Large ribosomal subunit protein eL32, found in Methanococcus maripaludis (strain C5 / ATCC BAA-1333).